A 419-amino-acid polypeptide reads, in one-letter code: Glutamate dehydrogenase (419 aa).

Lys105 is a catalytic residue. Residue 219–225 participates in NAD(+) binding; sequence GYGNAGY.

The protein belongs to the Glu/Leu/Phe/Val dehydrogenases family. As to quaternary structure, homohexamer.

The protein localises to the cytoplasm. The catalysed reaction is L-glutamate + NAD(+) + H2O = 2-oxoglutarate + NH4(+) + NADH + H(+). It catalyses the reaction L-glutamate + NADP(+) + H2O = 2-oxoglutarate + NH4(+) + NADPH + H(+). The protein is Glutamate dehydrogenase (gdhA) of Thermococcus litoralis (strain ATCC 51850 / DSM 5473 / JCM 8560 / NS-C).